The chain runs to 185 residues: ATP synthase subunit delta (185 aa).

The protein belongs to the ATPase delta chain family. F-type ATPases have 2 components, F(1) - the catalytic core - and F(0) - the membrane proton channel. F(1) has five subunits: alpha(3), beta(3), gamma(1), delta(1), epsilon(1). F(0) has three main subunits: a(1), b(2) and c(10-14). The alpha and beta chains form an alternating ring which encloses part of the gamma chain. F(1) is attached to F(0) by a central stalk formed by the gamma and epsilon chains, while a peripheral stalk is formed by the delta and b chains.

It is found in the cell inner membrane. F(1)F(0) ATP synthase produces ATP from ADP in the presence of a proton or sodium gradient. F-type ATPases consist of two structural domains, F(1) containing the extramembraneous catalytic core and F(0) containing the membrane proton channel, linked together by a central stalk and a peripheral stalk. During catalysis, ATP synthesis in the catalytic domain of F(1) is coupled via a rotary mechanism of the central stalk subunits to proton translocation. Functionally, this protein is part of the stalk that links CF(0) to CF(1). It either transmits conformational changes from CF(0) to CF(1) or is implicated in proton conduction. This is ATP synthase subunit delta from Coxiella burnetii (strain CbuK_Q154) (Coxiella burnetii (strain Q154)).